The primary structure comprises 289 residues: MKLRLGLPKGSLQEKTFQLFKKAGYDLQVNSRSYYPAVNDPELEILLMRAQEIPRYVHEGVLDAGLSGLDWIMENEADVVEVADLIYSKRSQRPVRLVLAVANDSDIREVRDLQGKRIATELVNVTRRYLAAQGVEAIVEYSYGATEVKVPNLVDAIADLTETGSSLRANNLRILAVILESNTKLHANRAAWADPWKREKLLNLTVLLTGALRAENMVGLKMNVPGDRIDAVLGVLPAMKHPTVSQLFNSDWVAIETILNEQQVRDLIPILKRAGAQDIIEYPLNKVIP.

The protein belongs to the ATP phosphoribosyltransferase family. Long subfamily. Mg(2+) serves as cofactor.

It localises to the cytoplasm. The catalysed reaction is 1-(5-phospho-beta-D-ribosyl)-ATP + diphosphate = 5-phospho-alpha-D-ribose 1-diphosphate + ATP. Its pathway is amino-acid biosynthesis; L-histidine biosynthesis; L-histidine from 5-phospho-alpha-D-ribose 1-diphosphate: step 1/9. With respect to regulation, feedback inhibited by histidine. Catalyzes the condensation of ATP and 5-phosphoribose 1-diphosphate to form N'-(5'-phosphoribosyl)-ATP (PR-ATP). Has a crucial role in the pathway because the rate of histidine biosynthesis seems to be controlled primarily by regulation of HisG enzymatic activity. This is ATP phosphoribosyltransferase from Desulforudis audaxviator (strain MP104C).